We begin with the raw amino-acid sequence, 635 residues long: Thrombopoietin receptor (635 aa).

A signal peptide spans 1–25; the sequence is MPSWALFMVTSCLLLAPQNLAQVSS. Residues 26-491 are Extracellular-facing; that stretch reads QDVSLLASDS…RVETATETAW (466 aa). Cystine bridges form between cysteine 40/cysteine 50 and cysteine 77/cysteine 93. N-linked (GlcNAc...) asparagine glycans are attached at residues asparagine 117 and asparagine 178. The Fibronectin type-III 1 domain occupies 172–281; the sequence is GPRDPKNSTG…WSLPVTVDLP (110 aa). Disulfide bonds link cysteine 193–cysteine 323, cysteine 194–cysteine 241, cysteine 291–cysteine 301, and cysteine 334–cysteine 352. The disordered stretch occupies residues 205 to 232; the sequence is ALDQSPCAQPTMPWQDGPKQTSPSREAS. N-linked (GlcNAc...) asparagine glycosylation is present at asparagine 298. Residue asparagine 358 is glycosylated (N-linked (GlcNAc...) asparagine). Positions 392 to 486 constitute a Fibronectin type-III 2 domain; it reads PTPNLHWREI…WSDPTRVETA (95 aa). The WSXWS motif motif lies at 474–478; it reads WSSWS. Residues 492-513 form a helical membrane-spanning segment; the sequence is ISLVTALHLVLGLSAVLGLLLL. The Cytoplasmic segment spans residues 514–635; sequence RWQFPAHYRR…YLPLSYWQQP (122 aa). The Box 1 motif signature appears at 528–536; the sequence is LWPSLPDLH. Glycyl lysine isopeptide (Lys-Gly) (interchain with G-Cter in ubiquitin) cross-links involve residues lysine 553 and lysine 573. Tyrosine 591, tyrosine 626, and tyrosine 631 each carry phosphotyrosine.

The protein belongs to the type I cytokine receptor family. Type 1 subfamily. As to quaternary structure, homodimer. Interacts with ATXN2L. Interacts with JAK2 and TYK2; these interactions increase MPL localization to the cell membrane. Interacts with THPO. Interacts with SHIP/INPP5D. Interacts with BTK. Interacts with SYK; this interaction negatively regulates THPO-mediated ERK1/2 signaling. In terms of processing, phosphorylated at Tyr-591 in response to THPO stimulation. Post-translationally, ubiquitination at Lys-553 and Lys-573 targets MPL for degradation by both the lysosomal and proteasomal pathways. The E3 ubiquitin-protein ligase CBL significantly contributes to this ubiquitination. Expressed at a low level in a large number of cells of hematopoietic origin. Isoform 1 and isoform 2 are always found to be coexpressed.

The protein resides in the cell membrane. The protein localises to the golgi apparatus. It localises to the cell surface. Functionally, receptor for thrombopoietin that regulates hematopoietic stem cell renewal, megakaryocyte differentiation, and platelet formation. Upon activation by THPO, induces rapid tyrosine phosphorylation and activation of JAK2, providing docking sites for many signaling proteins such as STAT5, SHIP/INPP5D, GRB2, SOS1 and PI3K. In turn, These signaling cascades lead to the proliferation, survival, and differentiation of megakaryocytes, ultimately leading to increased platelet production. This chain is Thrombopoietin receptor (MPL), found in Homo sapiens (Human).